A 948-amino-acid chain; its full sequence is Bifunctional glutamine synthetase adenylyltransferase/adenylyl-removing enzyme (948 aa).

The tract at residues 1–444 (MSLPSALLPT…VFATLIGEED (444 aa)) is adenylyl removase. The segment at 452–948 (ARHFHELWDM…VIQAWQQWLG (497 aa)) is adenylyl transferase.

Belongs to the GlnE family. Mg(2+) serves as cofactor.

It catalyses the reaction [glutamine synthetase]-O(4)-(5'-adenylyl)-L-tyrosine + phosphate = [glutamine synthetase]-L-tyrosine + ADP. The enzyme catalyses [glutamine synthetase]-L-tyrosine + ATP = [glutamine synthetase]-O(4)-(5'-adenylyl)-L-tyrosine + diphosphate. In terms of biological role, involved in the regulation of glutamine synthetase GlnA, a key enzyme in the process to assimilate ammonia. When cellular nitrogen levels are high, the C-terminal adenylyl transferase (AT) inactivates GlnA by covalent transfer of an adenylyl group from ATP to specific tyrosine residue of GlnA, thus reducing its activity. Conversely, when nitrogen levels are low, the N-terminal adenylyl removase (AR) activates GlnA by removing the adenylyl group by phosphorolysis, increasing its activity. The regulatory region of GlnE binds the signal transduction protein PII (GlnB) which indicates the nitrogen status of the cell. This Vibrio cholerae serotype O1 (strain ATCC 39315 / El Tor Inaba N16961) protein is Bifunctional glutamine synthetase adenylyltransferase/adenylyl-removing enzyme.